The following is a 66-amino-acid chain: UPF0337 protein SAG0606 (66 aa).

The span at 1-10 (MSQEKLKSKV) shows a compositional bias: basic and acidic residues. The tract at residues 1–23 (MSQEKLKSKVEQASGSLKEGAGK) is disordered.

It belongs to the UPF0337 (CsbD) family.

This chain is UPF0337 protein SAG0606, found in Streptococcus agalactiae serotype V (strain ATCC BAA-611 / 2603 V/R).